The chain runs to 490 residues: 5'-3' exonuclease PLD3 (490 aa).

At 1–38 (MKPKLMYQELKVPAEEPANELPMNEIEAWKAAEKKARW) the chain is on the cytoplasmic side. Residues 39 to 59 (VLLVLILAVVGFGALMTQLFL) form a helical; Signal-anchor for type II membrane protein membrane-spanning segment. Topologically, residues 60 to 490 (WEYGDLHLFG…DSVGNACRLL (431 aa)) are lumenal. 2 disulfides stabilise this stretch: C77–C239 and C81–C237. 2 N-linked (GlcNAc...) asparagine glycosylation sites follow: N97 and N132. Positions 196 to 223 (THGVLHTKFWVVDQTHFYLGSANMDWRS) constitute a PLD phosphodiesterase 1 domain. Active-site residues include H201, K203, and D208. The active-site Proton donor is the H201. Phosphate-binding residues include H201 and K203. N218 is a binding site for phosphate. Residues N236, N284, and N387 are each glycosylated (N-linked (GlcNAc...) asparagine). C366 and C487 are oxidised to a cystine. One can recognise a PLD phosphodiesterase 2 domain in the interval 411-437 (YARVNHNKYMVTERATYIGTSNWSGNY). H416 lines the phosphate pocket. The active-site Nucleophile is H416. Residue F438 coordinates Mg(2+).

It belongs to the phospholipase D family. Homodimer. Interacts with APP. N-glycosylated. Post-translationally, proteolytically processed to a soluble active form that is stable within endosomes and lysosomes. During transport through the secretory pathway becomes proteolysed by cysteine proteases, thereby releasing a stable soluble lysosomal lumenal polypeptide, whereas the transmembrane-bound fragment is rapidly degraded. Its transport route to lysosomes involves ubiquitination and the ESCRT complex. In terms of processing, ubiquitinated at N-terminus. Ubiquitination mediates sorting into lysosomes. In terms of tissue distribution, widely expressed. In the brain, high levels of expression are detected in the frontal, temporal and occipital cortices and hippocampus. Expressed at low level in corpus callosum. Expressed in plasmacytoid dendritic cells and monocytes (at protein level).

The protein resides in the endoplasmic reticulum membrane. Its subcellular location is the lysosome lumen. It localises to the early endosome membrane. It is found in the late endosome membrane. The protein localises to the golgi apparatus membrane. The protein resides in the endosome membrane. The catalysed reaction is Exonucleolytic cleavage in the 5'- to 3'-direction to yield nucleoside 3'-phosphates.. It catalyses the reaction a 5'-end 5'-dephospho-ribonucleotidyl-ribonucleotide-RNA + H2O = a ribonucleoside 3'-phosphate + a 5'-end dephospho-ribonucleoside-RNA + H(+). It carries out the reaction a ribonucleoside 3'-phosphate-2'-3'-cyclophospho-GMP + H2O = a ribonucleoside 3'-phosphate + 2',3'-cyclophospho-GMP + H(+). The enzyme catalyses a 5'-end 5'-dephospho-2'-deoxyribonucleotidyl-2'-deoxyribonucleotide in single-stranded DNA + H2O = a 5'-end dephospho-2'-deoxyribonucleoside in single-stranded DNA + a 2'-deoxyribonucleoside 3'-phosphate + H(+). The catalysed reaction is a 5'-end 5'-phospho-2'-deoxyribonucleotide in single-stranded DNA + H2O = a 5'-end 5'-dephospho-2'-deoxyribonucleotide in single-stranded DNA + phosphate. It catalyses the reaction a 3-lyso-sn-glycero-1-phospho-(3'-acyl-1'-sn-glycerol) + a 1-acyl-sn-glycerol = a 3-acyl-sn-glycero-1-phospho-(3'-acyl-1'-sn-glycerol) + glycerol. It carries out the reaction 3-lyso-sn-glycero-1-phospho-(3'-(9Z-octadecenoyl)-1'-sn-glycerol) + 1-(9Z-octadecenoyl)-sn-glycerol = 3-(9Z-octadecenoyl)-sn-glycero-1-phospho-(3'-(9Z-octadecenoyl)-1'-sn-glycerol) + glycerol. The exonuclease activity toward ssDNA substrate is Ca(2+) and Mg(2+)-independent, but it is inhibited by Fe(2+), Cu(2+) and to a lesser extent Zn(2+) ions. Functionally, 5'-&gt;3' exonuclease that hydrolyzes the phosphodiester bond of single-stranded DNA (ssDNA) and RNA molecules to form nucleoside 3'-monophosphates and 5'-end 5'-hydroxy deoxyribonucleotide/ribonucleotide fragments. Partially redundant with PLD4, can cleave all four nucleotides displaying higher efficiency for ssDNA and RNA fragments initiated with uridine and guanosine residues and lower efficiency for cytidine-initiated substrates. As a result, it does not always degrade polynucleotides to the single nucleotide level, it can stall at specific sites sparing certain fragments from exonucleolytic degradation. Processes self and pathogenic ssDNA and RNA molecules that reach the endolysosomal compartment via phagocytosis or autophagy and may serve as 'danger' signals for recognition by innate immune receptors such as toll-like receptors (TLRs). Degrades mitochondrial CpG-rich ssDNA fragments to prevent TLR9 activation and autoinflammatory response, but it can cleave viral RNA to generate ligands for TLR7 activation and initiate antiviral immune responses. In plasmacytoid dendritic cells, it cooperates with endonuclease RNASET2 to release 2',3'-cyclic guanosine monophosphate (2',3'-cGMP), a potent stimulatory ligand for TLR7. Produces 2',3'-cGMPs and cytidine-rich RNA fragments that occupy TLR7 ligand-binding pockets and trigger a signaling-competent state. Can exert polynucleotide phosphatase activity toward 5'-phosphorylated ssDNA substrates although at a slow rate. Transphosphatidylase that catalyzes the exchange with R to S stereo-inversion of the glycerol moiety between (S,R)-lysophosphatidylglycerol (LPG) and monoacylglycerol (MAG) substrates to yield (S,S)-bis(monoacylglycero)phosphate (BMP). Can synthesize a variety of (S,S)-BMPs representing the main phospholipid constituent of lysosomal intralumenal vesicle (ILV) membranes that bind acid hydrolases for lipid degradation. Regulates the homeostasis and interorganellar communication of the endolysosomal system with an overall impact on cellular removal of dysfunctional organelles via autophagy as well as proper protein and lipid turnover. May play a role in myotube formation in response to ER stress. This is 5'-3' exonuclease PLD3 from Homo sapiens (Human).